A 66-amino-acid polypeptide reads, in one-letter code: Large ribosomal subunit protein bL33c (66 aa).

This sequence belongs to the bacterial ribosomal protein bL33 family.

Its subcellular location is the plastid. The protein localises to the chloroplast. This is Large ribosomal subunit protein bL33c from Manihot esculenta (Cassava).